The sequence spans 309 residues: Carbamate kinase 3 (309 aa).

It belongs to the carbamate kinase family.

It localises to the cytoplasm. The catalysed reaction is hydrogencarbonate + NH4(+) + ATP = carbamoyl phosphate + ADP + H2O + H(+). Its pathway is metabolic intermediate metabolism; carbamoyl phosphate degradation; CO(2) and NH(3) from carbamoyl phosphate: step 1/1. In Staphylococcus aureus (strain USA300), this protein is Carbamate kinase 3 (arcC3).